The following is a 493-amino-acid chain: Cobyric acid synthase (493 aa).

Residues 252–440 (PVKIVVLRLR…IHGIFESDSL (189 aa)) form the GATase cobBQ-type domain. Cys-333 acts as the Nucleophile in catalysis. His-432 is an active-site residue.

The protein belongs to the CobB/CobQ family. CobQ subfamily.

It participates in cofactor biosynthesis; adenosylcobalamin biosynthesis. In terms of biological role, catalyzes amidations at positions B, D, E, and G on adenosylcobyrinic A,C-diamide. NH(2) groups are provided by glutamine, and one molecule of ATP is hydrogenolyzed for each amidation. The chain is Cobyric acid synthase from Thermodesulfovibrio yellowstonii (strain ATCC 51303 / DSM 11347 / YP87).